We begin with the raw amino-acid sequence, 536 residues long: MSKKILYGKEARKALLQGVDAIANTVKVTLGPKGRNVILEKAYDSPAIVNDGVSIAKEIELKNPYQNMGAKLVYEVASKTNDKAGDGTTTATVLAQSMIHRGFDAIDAGANPVLVKEGIELAALTVAKKLLAKSKKVDAQEDIQNVAAVSSGSQEIGKIIAQAMQKVGKDGVINVDESKGFETELEVVEGLQYDKGYASPYFVSDRESMTVQLENALVLVTDHKISTVQEIVPILEEVVKASRPLLIVAEAVENEVLGVLVANKLRGTFNVVVTNAPGFGDNQKEMLQDIAVLTKANFVSKELNMKLADLKMDDLGNINKAIIKKDNTTLISNSKSPELEKRIQVLKTQIKNATSDYETKNLQERLAKLSGGVALIKVGAATDTELKDKKLRIEDALNATKAAITEGIVVGGGKALVEVYQELKDTLVSDNKEVQQGIDVVVQSLLVPTYQIAYNAGFSGKDVVKQQLLQPLNFGFNAKEGKYVCLLKEGIIDPTKVTRQAVLNAASISALMITTEAAVVSLKENKDNNFDLGTQE.

ATP contacts are provided by residues 29–32 (TLGP), 86–90 (DGTTT), G412, and D493.

It belongs to the chaperonin (HSP60) family. In terms of assembly, forms a cylinder of 14 subunits composed of two heptameric rings stacked back-to-back. Interacts with the co-chaperonin GroES.

Its subcellular location is the cytoplasm. The enzyme catalyses ATP + H2O + a folded polypeptide = ADP + phosphate + an unfolded polypeptide.. Functionally, together with its co-chaperonin GroES, plays an essential role in assisting protein folding. The GroEL-GroES system forms a nano-cage that allows encapsulation of the non-native substrate proteins and provides a physical environment optimized to promote and accelerate protein folding. This is Chaperonin GroEL from Onion yellows phytoplasma (strain OY-M).